The following is a 309-amino-acid chain: Ribosomal RNA small subunit methyltransferase H (309 aa).

Residues 33 to 35 (GGH), Asp53, Phe79, Asp100, and Gln107 each bind S-adenosyl-L-methionine.

This sequence belongs to the methyltransferase superfamily. RsmH family.

The protein localises to the cytoplasm. The catalysed reaction is cytidine(1402) in 16S rRNA + S-adenosyl-L-methionine = N(4)-methylcytidine(1402) in 16S rRNA + S-adenosyl-L-homocysteine + H(+). Its function is as follows. Specifically methylates the N4 position of cytidine in position 1402 (C1402) of 16S rRNA. The protein is Ribosomal RNA small subunit methyltransferase H of Clostridium botulinum (strain Loch Maree / Type A3).